Consider the following 296-residue polypeptide: F-box only protein 2 (296 aa).

The segment at 1 to 41 (MDGDGDPESVGQPEEASPEEQPEEASAEEERPEDQQEEEAA) is disordered. Residues 16–40 (ASPEEQPEEASAEEERPEDQQEEEA) show a composition bias toward acidic residues. The F-box domain maps to 44–91 (AAYLDELPEPLLLRVLAALPAAELVQACRLVCLRWKELVDGAPLWLLK). The FBA domain maps to 113–296 (FYFLSKRRRN…VTNSSVWVEP (184 aa)). A carbohydrate is bound by residues 210–212 (RSD) and 278–279 (YW).

In terms of assembly, component of the SCF(FBXO2) complex consisting of CUL1, RBX1, SKP1 and FBXO2. Predominantly detected as heterodimer with SKP1; the heterodimer with SKP1 is not part of the SCF(FBXO2) complex.

Its subcellular location is the cytoplasm. It is found in the microsome membrane. The protein operates within protein modification; protein ubiquitination. Functionally, substrate recognition component of a SCF (SKP1-CUL1-F-box protein) E3 ubiquitin-protein ligase complex that mediates the ubiquitination and subsequent proteasomal degradation of target proteins. Involved in the endoplasmic reticulum-associated degradation pathway (ERAD) for misfolded lumenal proteins by recognizing and binding sugar chains on unfolded glycoproteins that are retrotranslocated into the cytosol and promoting their ubiquitination and subsequent degradation. Prevents formation of cytosolic aggregates of unfolded glycoproteins that have been retrotranslocated into the cytosol. Able to recognize and bind denatured glycoproteins, preferentially those of the high-mannose type. This Homo sapiens (Human) protein is F-box only protein 2 (FBXO2).